The primary structure comprises 322 residues: MVQLALKEEKELTKEEIKELQKEVRRLAKEKNAVILAHYYQRPEVQDIADFVGDSLELARKASQTDADIIVFCGVRFMCETAKIVNPEKKVLHPNPESGCPMADMITAKQVRELREKHPDAEFVAYINTTADVKAEVDICVTSANAPKIIKKLEAKKIVFLPDQALGNWVAKQVPEKEFIIWKGFCPPHFEFTYKELEKLKEMYPDAKVAVHPECHPRVIELADFVGSTSQILKYATSVDAKRVIVVTEVGLKYTLEKINPNKEYIFPQSMNYCGTVYCCTMKGITLPKVYETLKNEINEVTLPKDIIERARRPIERMLELS.

Histidine 38 and serine 55 together coordinate iminosuccinate. Cysteine 100 lines the [4Fe-4S] cluster pocket. Iminosuccinate contacts are provided by residues 126 to 128 (YIN) and serine 143. Cysteine 186 contributes to the [4Fe-4S] cluster binding site. Iminosuccinate-binding positions include 212–214 (HPE) and threonine 229. [4Fe-4S] cluster is bound at residue cysteine 279.

This sequence belongs to the quinolinate synthase family. Type 2 subfamily. [4Fe-4S] cluster is required as a cofactor.

It is found in the cytoplasm. It catalyses the reaction iminosuccinate + dihydroxyacetone phosphate = quinolinate + phosphate + 2 H2O + H(+). It functions in the pathway cofactor biosynthesis; NAD(+) biosynthesis; quinolinate from iminoaspartate: step 1/1. In terms of biological role, catalyzes the condensation of iminoaspartate with dihydroxyacetone phosphate to form quinolinate. The protein is Quinolinate synthase of Aquifex aeolicus (strain VF5).